Here is a 333-residue protein sequence, read N- to C-terminus: MIYLHNKRKGMLKRLSALIVIGLLMNLPAVFASGGEHAEAAHGDAAHAEAAHGGGAHHDPEKLDAIHHVIDGHEFDFEPFGIVHLPKIEVGGFDISLTRHVVMMWIAAAILLLIMFGVGNQYKKMTKNQAPKGMANLMEVLVDFIRLDVAKQNIGHGYERFMPFLLTIFFFILVCNLIGLVPYSATATGNINVTATLAIFTFLVTQASAIRAHGIGGFLAHLTGGTHPLMWIIMVPVEFIGLFTKPFALTVRLFANMTAGHIVIISLLGLIFVFKTYMIAPVSVAFALFIYLLEILVAFLQAYIFTLLSALFIGMAVAHEDHGDEAHGHAPSH.

The signal sequence occupies residues 1–32 (MIYLHNKRKGMLKRLSALIVIGLLMNLPAVFA). 7 consecutive transmembrane segments (helical) span residues 100 to 120 (HVVM…GVGN), 161 to 181 (FMPF…IGLV), 185 to 205 (ATAT…FLVT), 229 to 249 (LMWI…PFAL), 254 to 274 (FANM…IFVF), 279 to 299 (IAPV…LVAF), and 300 to 320 (LQAY…VAHE).

Belongs to the ATPase A chain family. F-type ATPases have 2 components, CF(1) - the catalytic core - and CF(0) - the membrane proton channel. CF(1) has five subunits: alpha(3), beta(3), gamma(1), delta(1), epsilon(1). CF(0) has four main subunits: a, b, b' and c.

It is found in the cell inner membrane. Key component of the proton channel; it plays a direct role in the translocation of protons across the membrane. The chain is ATP synthase subunit a from Chloroherpeton thalassium (strain ATCC 35110 / GB-78).